Reading from the N-terminus, the 595-residue chain is Isoprene synthase, chloroplastic (595 aa).

The transit peptide at 1-37 directs the protein to the chloroplast; sequence MATELLCLHRPISLTHKLFRNPLPKVIQATPLTLKLR. Residue D345 participates in dimethylallyl diphosphate binding. Residues D345 and D349 each contribute to the Mg(2+) site. The short motif at 345-349 is the DDXXD motif element; the sequence is DDIYD. 3 residues coordinate dimethylallyl diphosphate: E423, R486, and N489. Mg(2+) contacts are provided by N489, S493, and E497.

Belongs to the terpene synthase family. Tpsb subfamily. Requires Mg(2+) as cofactor. It depends on Mn(2+) as a cofactor.

The protein localises to the plastid. It localises to the chloroplast. The enzyme catalyses dimethylallyl diphosphate = isoprene + diphosphate. Its function is as follows. Lyase that catalyzes the formation of isoprene from dimethylallyl diphosphate. In Populus tremuloides (Quaking aspen), this protein is Isoprene synthase, chloroplastic (ISPS).